The primary structure comprises 223 residues: Deoxyribose-phosphate aldolase (223 aa).

Asp91 serves as the catalytic Proton donor/acceptor. Lys154 (schiff-base intermediate with acetaldehyde) is an active-site residue. The Proton donor/acceptor role is filled by Lys183.

It belongs to the DeoC/FbaB aldolase family. DeoC type 1 subfamily.

The protein localises to the cytoplasm. It carries out the reaction 2-deoxy-D-ribose 5-phosphate = D-glyceraldehyde 3-phosphate + acetaldehyde. The protein operates within carbohydrate degradation; 2-deoxy-D-ribose 1-phosphate degradation; D-glyceraldehyde 3-phosphate and acetaldehyde from 2-deoxy-alpha-D-ribose 1-phosphate: step 2/2. Its function is as follows. Catalyzes a reversible aldol reaction between acetaldehyde and D-glyceraldehyde 3-phosphate to generate 2-deoxy-D-ribose 5-phosphate. The chain is Deoxyribose-phosphate aldolase from Geobacillus kaustophilus (strain HTA426).